The primary structure comprises 445 residues: UDP-glucuronic acid decarboxylase 2 (445 aa).

An N-acetylalanine modification is found at Ala-2. Residues 2 to 43 (ASELINRRHETDQPTADAYYPKPIKPWFTVTRPMRYMLREQR) are Cytoplasmic-facing. Residues 44 to 64 (LIFVLVGIAIATLVFTIFPRS) traverse the membrane as a helical; Signal-anchor for type II membrane protein segment. At 65–445 (TQSTPYSDPF…AATTTKTTSA (381 aa)) the chain is on the lumenal side. NAD(+) is bound at residue 149–174 (DNFFTGRKENVMHHFSNPNFEMIRHD). Residue Arg-258 coordinates substrate. Tyr-261 acts as the Proton acceptor in catalysis. An NAD(+)-binding site is contributed by 261–265 (YDEGK). A substrate-binding site is contributed by Asn-290. Position 302 (Arg-302) interacts with NAD(+). Substrate-binding positions include 303–307 (VVSNF), 320–327 (YGDGKQTR), and 387–391 (DPHKR).

The protein belongs to the NAD(P)-dependent epimerase/dehydratase family. UDP-glucuronic acid decarboxylase subfamily. In terms of assembly, homodimer. Requires NAD(+) as cofactor. Ubiquitous.

The protein resides in the golgi apparatus. It localises to the golgi stack membrane. The catalysed reaction is UDP-alpha-D-glucuronate + H(+) = UDP-alpha-D-xylose + CO2. The protein operates within nucleotide-sugar biosynthesis; UDP-alpha-D-xylose biosynthesis; UDP-alpha-D-xylose from UDP-alpha-D-glucuronate: step 1/1. Catalyzes the NAD-dependent decarboxylation of UDP-glucuronic acid to UDP-xylose. Necessary for the biosynthesis of the core tetrasaccharide in glycosaminoglycan biosynthesis. In Arabidopsis thaliana (Mouse-ear cress), this protein is UDP-glucuronic acid decarboxylase 2 (UXS2).